Here is a 206-residue protein sequence, read N- to C-terminus: Guanylate kinase (206 aa).

The 181-residue stretch at 13–193 folds into the Guanylate kinase-like domain; that stretch reads PLLLVVSGPS…AVSEIMSIIS (181 aa). Residue 20-27 participates in ATP binding; that stretch reads GPSGVGKD.

This sequence belongs to the guanylate kinase family.

Its subcellular location is the cytoplasm. It carries out the reaction GMP + ATP = GDP + ADP. Functionally, essential for recycling GMP and indirectly, cGMP. This Dehalococcoides mccartyi (strain ATCC BAA-2266 / KCTC 15142 / 195) (Dehalococcoides ethenogenes (strain 195)) protein is Guanylate kinase.